Here is a 471-residue protein sequence, read N- to C-terminus: Glutamate--tRNA ligase (471 aa).

Positions P9–G19 match the 'HIGH' region motif. Zn(2+) contacts are provided by C98, C100, C125, and H127. The short motif at K237 to R241 is the 'KMSKS' region element. Residue K240 coordinates ATP.

Belongs to the class-I aminoacyl-tRNA synthetase family. Glutamate--tRNA ligase type 1 subfamily. In terms of assembly, monomer. Zn(2+) is required as a cofactor.

It localises to the cytoplasm. It carries out the reaction tRNA(Glu) + L-glutamate + ATP = L-glutamyl-tRNA(Glu) + AMP + diphosphate. Functionally, catalyzes the attachment of glutamate to tRNA(Glu) in a two-step reaction: glutamate is first activated by ATP to form Glu-AMP and then transferred to the acceptor end of tRNA(Glu). This is Glutamate--tRNA ligase from Escherichia coli O9:H4 (strain HS).